The chain runs to 287 residues: Bifunctional protein FolD (287 aa).

NADP(+)-binding positions include 166–168 (GAS), serine 191, and isoleucine 232.

It belongs to the tetrahydrofolate dehydrogenase/cyclohydrolase family. Homodimer.

It catalyses the reaction (6R)-5,10-methylene-5,6,7,8-tetrahydrofolate + NADP(+) = (6R)-5,10-methenyltetrahydrofolate + NADPH. The enzyme catalyses (6R)-5,10-methenyltetrahydrofolate + H2O = (6R)-10-formyltetrahydrofolate + H(+). It participates in one-carbon metabolism; tetrahydrofolate interconversion. Functionally, catalyzes the oxidation of 5,10-methylenetetrahydrofolate to 5,10-methenyltetrahydrofolate and then the hydrolysis of 5,10-methenyltetrahydrofolate to 10-formyltetrahydrofolate. The sequence is that of Bifunctional protein FolD from Haemophilus ducreyi (strain 35000HP / ATCC 700724).